The following is a 33-amino-acid chain: Protamine-1A (33 aa).

The interval 1 to 33 is disordered; it reads PRRRRSSSRPVRRRRRPRRVSRRRRRRGGRRRR.

In terms of tissue distribution, testis.

The protein resides in the nucleus. It localises to the chromosome. Functionally, protamines substitute for histones in the chromatin of sperm during the haploid phase of spermatogenesis. They compact sperm DNA into a highly condensed, stable and inactive complex. This is Protamine-1A from Oncorhynchus mykiss (Rainbow trout).